We begin with the raw amino-acid sequence, 301 residues long: 4-diphosphocytidyl-2-C-methyl-D-erythritol kinase (301 aa).

Lys-10 is a catalytic residue. 96–106 contacts ATP; it reads PMGGGVGGGSS. Asp-138 is a catalytic residue.

It belongs to the GHMP kinase family. IspE subfamily.

It catalyses the reaction 4-CDP-2-C-methyl-D-erythritol + ATP = 4-CDP-2-C-methyl-D-erythritol 2-phosphate + ADP + H(+). It participates in isoprenoid biosynthesis; isopentenyl diphosphate biosynthesis via DXP pathway; isopentenyl diphosphate from 1-deoxy-D-xylulose 5-phosphate: step 3/6. Its function is as follows. Catalyzes the phosphorylation of the position 2 hydroxy group of 4-diphosphocytidyl-2C-methyl-D-erythritol. This Alcanivorax borkumensis (strain ATCC 700651 / DSM 11573 / NCIMB 13689 / SK2) protein is 4-diphosphocytidyl-2-C-methyl-D-erythritol kinase.